The following is a 1319-amino-acid chain: Son of sevenless homolog 1 (1319 aa).

The region spanning 200 to 390 (TYYDLVKAFM…LNVQSGMEKI (191 aa)) is the DH domain. The 105-residue stretch at 444 to 548 (FIMEGTLTRV…AALISLQYRS (105 aa)) folds into the PH domain. In terms of domain architecture, N-terminal Ras-GEF spans 597–741 (GIPIIKAGTV…SITKIIQRKK (145 aa)). The region spanning 780-1019 (HPIEIARQLT…FNKSLEIEPR (240 aa)) is the Ras-GEF domain. Positions 1019–1101 (RHPKPLPRFP…ASGTSSNTDV (83 aa)) are disordered. Residues S1078 and S1082 each carry the phosphoserine modification. Phosphoserine; by RPS6KA3 is present on residues S1120 and S1147. The disordered stretch occupies residues 1121-1319 (VSSISLSKGT…PPLLENAHSS (199 aa)). S1164, S1196, and S1215 each carry phosphoserine. Pro residues predominate over residues 1194–1203 (PESPPLLPPR). A compositionally biased stretch (pro residues) spans 1238-1250 (SPSPFTPPPPQTP). S1261 is modified (phosphoserine). The segment covering 1296-1309 (YKREHTHPSMHRDG) has biased composition (basic and acidic residues).

As to quaternary structure, interacts (via C-terminus) with GRB2 (via SH3 domain). Forms a complex with phosphorylated MUC1 and GRB2 (via its SH3 domains). Interacts with phosphorylated LAT2. Interacts with NCK1 and NCK2. Part of a complex consisting of ABI1, EPS8 and SOS1. Interacts (Ser-1120 and Ser-1147 phosphorylated form) with YWHAB and YWHAE. Post-translationally, phosphorylation at Ser-1120 and Ser-1147 by RPS6KA3 create YWHAB and YWHAE binding sites and which contribute to the negative regulation of EGF-induced MAPK1/3 phosphorylation. In terms of tissue distribution, expressed in most embryonic and adult tissues.

Its function is as follows. Promotes the exchange of Ras-bound GDP by GTP. Probably by promoting Ras activation, regulates phosphorylation of MAP kinase MAPK3 in response to EGF. Catalytic component of a trimeric complex that participates in transduction of signals from Ras to Rac by promoting the Rac-specific guanine nucleotide exchange factor (GEF) activity. The protein is Son of sevenless homolog 1 (Sos1) of Mus musculus (Mouse).